A 187-amino-acid polypeptide reads, in one-letter code: Elongation factor P (187 aa).

Belongs to the elongation factor P family.

Its subcellular location is the cytoplasm. Its pathway is protein biosynthesis; polypeptide chain elongation. Involved in peptide bond synthesis. Stimulates efficient translation and peptide-bond synthesis on native or reconstituted 70S ribosomes in vitro. Probably functions indirectly by altering the affinity of the ribosome for aminoacyl-tRNA, thus increasing their reactivity as acceptors for peptidyl transferase. This chain is Elongation factor P (efp), found in Synechocystis sp. (strain ATCC 27184 / PCC 6803 / Kazusa).